The following is a 457-amino-acid chain: Argininosuccinate lyase (457 aa).

The protein belongs to the lyase 1 family. Argininosuccinate lyase subfamily.

It is found in the cytoplasm. It catalyses the reaction 2-(N(omega)-L-arginino)succinate = fumarate + L-arginine. It participates in amino-acid biosynthesis; L-arginine biosynthesis; L-arginine from L-ornithine and carbamoyl phosphate: step 3/3. The protein is Argininosuccinate lyase of Shigella sonnei (strain Ss046).